Consider the following 1323-residue polypeptide: PH domain leucine-rich repeat-containing protein phosphatase 2 (1323 aa).

The 99-residue stretch at 150–248 (RILLSGIYNV…WQRQASKVVS (99 aa)) folds into the PH domain. 22 LRR repeats span residues 250 to 271 (RIST…LFYS), 273 to 296 (DITY…DTLY), 300 to 321 (QLKG…LCEI), 323 to 344 (TLTE…IGNL), 346 to 368 (NLQT…GNLQ), 369 to 390 (QLSS…YEKL), 392 to 412 (MLDR…GVLN), 416 to 439 (HIKH…EGNK), 440 to 460 (HITH…SSLC), 461 to 480 (SLEQ…LSGF), 481 to 502 (SLRT…PVPS), 503 to 524 (LLTF…ACEA), 526 to 547 (KIEV…ILSS), 549 to 570 (SLRK…VEHI), 571 to 592 (PLEV…LFSK), 595 to 616 (NLRY…CTGE), 621 to 644 (MLQL…VGHL), 645 to 666 (HLRI…KLNK), 669 to 690 (QLEE…IANC), 692 to 713 (RLHT…LQLP), 714 to 735 (QIQF…EALP), and 737 to 758 (TLQD…TLDI). The PPM-type phosphatase domain maps to 785–1033 (SHGLAEMAGQ…DNVGAMVVYL (249 aa)). Mn(2+)-binding residues include D820, G821, K985, and D1024. The interval 1060 to 1157 (TIKDAPKPAT…DSDDDQPVEG (98 aa)) is disordered. Low complexity predominate over residues 1071–1097 (SSSSGIASEFSSEMSTSEVSSEVGSTA). Over residues 1122–1146 (PTPTSGLFQRQPSSATFSSNQSDNG) the composition is skewed to polar residues. S1210 bears the Phosphoserine mark. The segment at 1285–1323 (HDLEEEVKEQMKQHQDSRLEPEPHEEDRTEPPEEFDTAL) is disordered. Residues 1292-1315 (KEQMKQHQDSRLEPEPHEEDRTEP) show a composition bias toward basic and acidic residues.

As to quaternary structure, interacts with AKT1, AKT3 and PRKCB isoform beta-II. Interacts with STK4, RPS6KB1, RAF1. Interacts with FKBP5; FKBP5 acts as a scaffold for PHLPP2 and Akt. Interacts with NHERF1; NHERF1 scaffolds a heterotrimeric complex with PTEN. It depends on Mn(2+) as a cofactor. In colorectal cancer tissue, expression is highest in the surface epithelium of normal colonic mucosa adjacent to the cancer tissue but is largely excluded from the crypt bases. Expression is lost or significantly decreased in 80% of tested tumors (at protein level).

It is found in the cytoplasm. It localises to the membrane. The protein resides in the nucleus. The enzyme catalyses O-phospho-L-seryl-[protein] + H2O = L-seryl-[protein] + phosphate. The catalysed reaction is O-phospho-L-threonyl-[protein] + H2O = L-threonyl-[protein] + phosphate. With respect to regulation, inhibited by AKT1, AKT2 and AKT3. Activated by oleic acid and arachidonic acid. Its function is as follows. Protein phosphatase involved in regulation of Akt and PKC signaling. Mediates dephosphorylation in the C-terminal domain hydrophobic motif of members of the AGC Ser/Thr protein kinase family; specifically acts on 'Ser-473' of AKT1, 'Ser-660' of PRKCB isoform beta-II and 'Ser-657' of PRKCA. Akt regulates the balance between cell survival and apoptosis through a cascade that primarily alters the function of transcription factors that regulate pro- and antiapoptotic genes. Dephosphorylation of 'Ser-473' of Akt triggers apoptosis and decreases cell proliferation. Also controls the phosphorylation of AKT3. Dephosphorylates STK4 on 'Thr-387' leading to STK4 activation and apoptosis. Dephosphorylates RPS6KB1 and is involved in regulation of cap-dependent translation. Inhibits cancer cell proliferation and may act as a tumor suppressor. Dephosphorylation of PRKCA and PRKCB leads to their destabilization and degradation. Dephosphorylates RAF1 inhibiting its kinase activity. This is PH domain leucine-rich repeat-containing protein phosphatase 2 (PHLPP2) from Homo sapiens (Human).